A 597-amino-acid polypeptide reads, in one-letter code: Leishmanolysin (597 aa).

A signal peptide spans 1–39 (MSVDSSSTHRHRCVAARLVPLAAAGAAVTVAVGTAAAWA). Positions 40-99 (HAGAVQHRCIHDAMQARVRQSVAAQRMAPSAVSAVGLPHVTLDAGNTAAGADPSTGTANV) are cleaved as a propeptide — activation peptide. Cystine bridges form between Cys124–Cys141 and Cys190–Cys229. Residue His263 participates in Zn(2+) binding. Residue Glu264 is part of the active site. Zn(2+) is bound at residue His267. The N-linked (GlcNAc...) asparagine glycan is linked to Asn299. 7 disulfide bridges follow: Cys313-Cys383, Cys390-Cys452, Cys403-Cys422, Cys412-Cys486, Cys463-Cys507, Cys512-Cys562, and Cys532-Cys555. Residue His332 coordinates Zn(2+). The N-linked (GlcNAc...) asparagine glycan is linked to Asn404. Asn574 is lipidated: GPI-anchor amidated asparagine. The propeptide at 575 to 597 (AAGRRGPRAATALVVAALLAVAL) is removed in mature form.

Belongs to the peptidase M8 family. The cofactor is Zn(2+).

Its subcellular location is the cell membrane. The enzyme catalyses Preference for hydrophobic residues at P1 and P1' and basic residues at P2' and P3'. A model nonapeptide is cleaved at -Ala-Tyr-|-Leu-Lys-Lys-.. Functionally, has an integral role during the infection of macrophages in the mammalian host. The protein is Leishmanolysin (gp63) of Leishmania amazonensis.